Consider the following 473-residue polypeptide: Histidinol dehydrogenase, chloroplastic (473 aa).

Residues 1–28 are disordered; the sequence is MSLRPGRAHPLAASPLHTPLPARPRPQL. Tyrosine 162, glutamine 224, and asparagine 247 together coordinate NAD(+). Substrate-binding residues include serine 273, glutamine 295, and histidine 298. Residues glutamine 295 and histidine 298 each contribute to the Zn(2+) site. Catalysis depends on proton acceptor residues glutamate 363 and histidine 364. The substrate site is built by histidine 364, aspartate 397, glutamate 451, and histidine 456. Aspartate 397 is a Zn(2+) binding site. A Zn(2+)-binding site is contributed by histidine 456.

Belongs to the histidinol dehydrogenase family. It depends on Zn(2+) as a cofactor.

Its subcellular location is the plastid. The protein localises to the chloroplast. The enzyme catalyses L-histidinol + 2 NAD(+) + H2O = L-histidine + 2 NADH + 3 H(+). It functions in the pathway amino-acid biosynthesis; L-histidine biosynthesis; L-histidine from 5-phospho-alpha-D-ribose 1-diphosphate: step 9/9. Its function is as follows. Catalyzes the sequential NAD-dependent oxidations of L-histidinol to L-histidinaldehyde and then to L-histidine. In Oryza sativa subsp. japonica (Rice), this protein is Histidinol dehydrogenase, chloroplastic (HDH).